A 460-amino-acid polypeptide reads, in one-letter code: Argininosuccinate lyase (460 aa).

Belongs to the lyase 1 family. Argininosuccinate lyase subfamily.

The protein resides in the cytoplasm. The enzyme catalyses 2-(N(omega)-L-arginino)succinate = fumarate + L-arginine. It participates in amino-acid biosynthesis; L-arginine biosynthesis; L-arginine from L-ornithine and carbamoyl phosphate: step 3/3. The chain is Argininosuccinate lyase from Sulfurimonas denitrificans (strain ATCC 33889 / DSM 1251) (Thiomicrospira denitrificans (strain ATCC 33889 / DSM 1251)).